The chain runs to 213 residues: Leucyl/phenylalanyl-tRNA--protein transferase (213 aa).

This sequence belongs to the L/F-transferase family.

It localises to the cytoplasm. It carries out the reaction N-terminal L-lysyl-[protein] + L-leucyl-tRNA(Leu) = N-terminal L-leucyl-L-lysyl-[protein] + tRNA(Leu) + H(+). The enzyme catalyses N-terminal L-arginyl-[protein] + L-leucyl-tRNA(Leu) = N-terminal L-leucyl-L-arginyl-[protein] + tRNA(Leu) + H(+). It catalyses the reaction L-phenylalanyl-tRNA(Phe) + an N-terminal L-alpha-aminoacyl-[protein] = an N-terminal L-phenylalanyl-L-alpha-aminoacyl-[protein] + tRNA(Phe). Functionally, functions in the N-end rule pathway of protein degradation where it conjugates Leu, Phe and, less efficiently, Met from aminoacyl-tRNAs to the N-termini of proteins containing an N-terminal arginine or lysine. This Campylobacter lari (strain RM2100 / D67 / ATCC BAA-1060) protein is Leucyl/phenylalanyl-tRNA--protein transferase.